A 206-amino-acid chain; its full sequence is Octanoyltransferase (206 aa).

In terms of domain architecture, BPL/LPL catalytic spans 30-206 (PETNDEIWLV…EFVTLLNNSI (177 aa)). Residues 69–76 (RGGQVTYH), 137–139 (SLG), and 150–152 (GIA) each bind substrate. C168 acts as the Acyl-thioester intermediate in catalysis.

It belongs to the LipB family.

The protein resides in the cytoplasm. It carries out the reaction octanoyl-[ACP] + L-lysyl-[protein] = N(6)-octanoyl-L-lysyl-[protein] + holo-[ACP] + H(+). Its pathway is protein modification; protein lipoylation via endogenous pathway; protein N(6)-(lipoyl)lysine from octanoyl-[acyl-carrier-protein]: step 1/2. In terms of biological role, catalyzes the transfer of endogenously produced octanoic acid from octanoyl-acyl-carrier-protein onto the lipoyl domains of lipoate-dependent enzymes. Lipoyl-ACP can also act as a substrate although octanoyl-ACP is likely to be the physiological substrate. In Francisella tularensis subsp. holarctica (strain FTNF002-00 / FTA), this protein is Octanoyltransferase.